The sequence spans 1582 residues: SET-binding protein (1582 aa).

Disordered regions lie at residues 1 to 76 (MEPR…WVAG), 124 to 246 (ITIK…KVPA), 278 to 416 (LLGS…KRQS), and 446 to 513 (SNSE…KLSE). Polar residues predominate over residues 18-27 (EFLQGSSSRS). A compositionally biased stretch (basic and acidic residues) spans 57 to 74 (GSGRDVDCNSNADSEKWV). Polar residues-rich tracts occupy residues 126–141 (IKQS…GKNS) and 213–229 (MEWS…QNCF). Low complexity predominate over residues 278–298 (LLGSVVPSPSSHNSPATPSSS). Residues 356–365 (ETTEGKREAY) show a composition bias toward basic and acidic residues. A compositionally biased stretch (polar residues) spans 368-388 (DSAQEASPARQSISSVSNPEN). The span at 450–465 (GSKKDPRVPKLGKMIE) shows a compositional bias: basic and acidic residues. Residues 575 to 587 (KKKRGRPKKQPLL) constitute a DNA-binding region (a.T hook 1). Disordered regions lie at residues 595–617 (GTST…RKRR) and 709–787 (RGTI…ASTE). Residues 770–787 (LSTQLGGSNGNLSPASTE) are compositionally biased toward polar residues. Residue Lys808 is modified to N6-acetyllysine. Polar residues predominate over residues 845-871 (SPVSESHSEETIPSDSGIGTDNNSTSD). The disordered stretch occupies residues 845-880 (SPVSESHSEETIPSDSGIGTDNNSTSDQAEKSSESR). Positions 1007–1019 (KKKRGRPAKTNDT) form a DNA-binding region, a.T hook 2. Disordered regions lie at residues 1128-1155 (VGGA…DRIL), 1182-1215 (SGSD…VSKN), 1236-1265 (AKDK…TRSE), 1429-1461 (QRQS…RDQM), 1470-1489 (LPSK…EPAS), and 1507-1582 (EAPP…DVLP). Residues 1137-1150 (RLHKRKHKHKRKHK) are compositionally biased toward basic residues. Over residues 1182 to 1196 (SGSDKELPLVSEKSK) the composition is skewed to basic and acidic residues. Positions 1439 to 1448 (VKKRRGRPRK) are enriched in basic residues. The segment at residues 1440 to 1452 (KKRRGRPRKQPSQ) is a DNA-binding region (a.T hook 3). Pro residues-rich tracts occupy residues 1509–1533 (PPLP…PPLP) and 1546–1559 (QPPA…PQPL).

As to quaternary structure, interacts with SET.

Its subcellular location is the nucleus. The chain is SET-binding protein (Setbp1) from Mus musculus (Mouse).